A 268-amino-acid chain; its full sequence is Imidazole glycerol phosphate synthase subunit HisF (268 aa).

Active-site residues include D12 and D131.

This sequence belongs to the HisA/HisF family. In terms of assembly, heterodimer of HisH and HisF.

It is found in the cytoplasm. The catalysed reaction is 5-[(5-phospho-1-deoxy-D-ribulos-1-ylimino)methylamino]-1-(5-phospho-beta-D-ribosyl)imidazole-4-carboxamide + L-glutamine = D-erythro-1-(imidazol-4-yl)glycerol 3-phosphate + 5-amino-1-(5-phospho-beta-D-ribosyl)imidazole-4-carboxamide + L-glutamate + H(+). It functions in the pathway amino-acid biosynthesis; L-histidine biosynthesis; L-histidine from 5-phospho-alpha-D-ribose 1-diphosphate: step 5/9. In terms of biological role, IGPS catalyzes the conversion of PRFAR and glutamine to IGP, AICAR and glutamate. The HisF subunit catalyzes the cyclization activity that produces IGP and AICAR from PRFAR using the ammonia provided by the HisH subunit. This Methanoculleus marisnigri (strain ATCC 35101 / DSM 1498 / JR1) protein is Imidazole glycerol phosphate synthase subunit HisF.